Consider the following 500-residue polypeptide: Glycerol kinase (500 aa).

Position 12 (Thr-12) interacts with ADP. ATP is bound by residues Thr-12, Thr-13, and Ser-14. Position 12 (Thr-12) interacts with sn-glycerol 3-phosphate. Arg-16 provides a ligand contact to ADP. Sn-glycerol 3-phosphate-binding residues include Arg-82, Glu-83, Tyr-135, and Asp-245. 5 residues coordinate glycerol: Arg-82, Glu-83, Tyr-135, Asp-245, and Gln-246. Residues Thr-267 and Gly-310 each contribute to the ADP site. ATP is bound by residues Thr-267, Gly-310, Gln-314, and Gly-411. 2 residues coordinate ADP: Gly-411 and Asn-415.

This sequence belongs to the FGGY kinase family. In terms of assembly, homotetramer and homodimer (in equilibrium).

The catalysed reaction is glycerol + ATP = sn-glycerol 3-phosphate + ADP + H(+). It functions in the pathway polyol metabolism; glycerol degradation via glycerol kinase pathway; sn-glycerol 3-phosphate from glycerol: step 1/1. With respect to regulation, activated by phosphorylation and inhibited by fructose 1,6-bisphosphate (FBP). Key enzyme in the regulation of glycerol uptake and metabolism. Catalyzes the phosphorylation of glycerol to yield sn-glycerol 3-phosphate. This chain is Glycerol kinase, found in Clostridium perfringens (strain ATCC 13124 / DSM 756 / JCM 1290 / NCIMB 6125 / NCTC 8237 / Type A).